A 236-amino-acid chain; its full sequence is Small ribosomal subunit protein uS2c (236 aa).

Belongs to the universal ribosomal protein uS2 family.

The protein localises to the plastid. Its subcellular location is the chloroplast. This Crucihimalaya wallichii (Rock-cress) protein is Small ribosomal subunit protein uS2c (rps2).